The sequence spans 234 residues: Triosephosphate isomerase (234 aa).

8–10 (NFK) lines the substrate pocket. The active-site Electrophile is the H90. Catalysis depends on E159, which acts as the Proton acceptor. 2 residues coordinate substrate: G165 and S197.

Belongs to the triosephosphate isomerase family. In terms of assembly, homodimer.

The protein resides in the cytoplasm. It carries out the reaction D-glyceraldehyde 3-phosphate = dihydroxyacetone phosphate. The protein operates within carbohydrate biosynthesis; gluconeogenesis. It participates in carbohydrate degradation; glycolysis; D-glyceraldehyde 3-phosphate from glycerone phosphate: step 1/1. Involved in the gluconeogenesis. Catalyzes stereospecifically the conversion of dihydroxyacetone phosphate (DHAP) to D-glyceraldehyde-3-phosphate (G3P). This Helicobacter pylori (strain G27) protein is Triosephosphate isomerase.